The following is a 102-amino-acid chain: Small ribosomal subunit protein uS10 (102 aa).

This sequence belongs to the universal ribosomal protein uS10 family. Part of the 30S ribosomal subunit.

Its function is as follows. Involved in the binding of tRNA to the ribosomes. The polypeptide is Small ribosomal subunit protein uS10 (Thermobifida fusca (strain YX)).